The sequence spans 281 residues: Insecticidal crystal toxin protein (281 aa).

Antigenic epitope stretches follow at residues 54–78 (NYSH…VYTF), 91–104 (IYTH…AVKA), 108–116 (GTASKVVQG), 131–148 (FKIT…FIRI), 160–172 (AVIN…VAEL), 189–196 (KYKDFQYL), 208–216 (QNISLVFNR), 221–236 (TNTT…LPIT), and 247–256 (KLETVQQIIN).

It belongs to the delta endotoxin family.

Functionally, promotes colloidosmotic lysis by binding to the midgut epithelial cells of insects. Active against Mamestra brassicae. The chain is Insecticidal crystal toxin protein from Bacillus thuringiensis subsp. kurstaki.